We begin with the raw amino-acid sequence, 175 residues long: Large ribosomal subunit protein uL16 (175 aa).

The protein belongs to the universal ribosomal protein uL16 family.

The polypeptide is Large ribosomal subunit protein uL16 (Metallosphaera sedula (strain ATCC 51363 / DSM 5348 / JCM 9185 / NBRC 15509 / TH2)).